Reading from the N-terminus, the 1074-residue chain is Phospholipase D1 (1074 aa).

The PX domain occupies 81–212; the sequence is IKAQVLEVER…TEFLDISQLS (132 aa). A PH domain is found at 219–328; the sequence is PKGIEGMIMK…WGGAIEEFIQ (110 aa). S-palmitoyl cysteine attachment occurs at residues Cys240 and Cys241. Positions 459-486 constitute a PLD phosphodiesterase 1 domain; sequence YLWAHHEKLVIIDQSVAFVGGIDLAYGR. Residues 463–928 are catalytic; sequence HHEKLVIIDQ…MLGKRDSEMA (466 aa). Phosphoserine is present on residues Ser499, Ser561, and Ser629. A PLD phosphodiesterase 2 domain is found at 891–918; the sequence is ELIYVHSKLLIADDNTVIIGSANINDRS.

The protein belongs to the phospholipase D family. Interacts with PIP5K1B. In terms of tissue distribution, expressed abundantly in the pancreas and heart and at high levels in brain, placenta, spleen, uterus and small intestine.

It localises to the cytoplasm. The protein localises to the perinuclear region. Its subcellular location is the endoplasmic reticulum membrane. The protein resides in the golgi apparatus membrane. It is found in the late endosome membrane. The enzyme catalyses a 1,2-diacyl-sn-glycero-3-phosphocholine + H2O = a 1,2-diacyl-sn-glycero-3-phosphate + choline + H(+). It carries out the reaction ethanol + a 1,2-diacyl-sn-glycero-3-phosphocholine = 1,2-diacyl-sn-glycero-3-phosphoethanol + choline. It catalyses the reaction 1,2-dihexadecanoyl-sn-glycero-3-phosphocholine + H2O = 1,2-dihexadecanoyl-sn-glycero-3-phosphate + choline + H(+). Stimulated by phosphatidylinositol 4,5-bisphosphate and phosphatidylinositol 3,4,5-trisphosphate, activated by the phosphokinase C-alpha, by the ADP-ribosylation factor-1 (ARF-1), and to a lesser extent by GTP-binding proteins: RHO A, RAC-1 and CDC42. Inhibited by oleate. In terms of biological role, function as phospholipase selective for phosphatidylcholine. Implicated as a critical step in numerous cellular pathways, including signal transduction, membrane trafficking, and the regulation of mitosis. May be involved in the regulation of perinuclear intravesicular membrane traffic. The protein is Phospholipase D1 of Homo sapiens (Human).